The sequence spans 356 residues: UDP-N-acetylglucosamine--N-acetylmuramyl-(pentapeptide) pyrophosphoryl-undecaprenol N-acetylglucosamine transferase (356 aa).

The UDP-N-acetyl-alpha-D-glucosamine site is built by Ser198 and Gln289.

It belongs to the glycosyltransferase 28 family. MurG subfamily.

It is found in the cell membrane. The catalysed reaction is Mur2Ac(oyl-L-Ala-gamma-D-Glu-L-Lys-D-Ala-D-Ala)-di-trans,octa-cis-undecaprenyl diphosphate + UDP-N-acetyl-alpha-D-glucosamine = beta-D-GlcNAc-(1-&gt;4)-Mur2Ac(oyl-L-Ala-gamma-D-Glu-L-Lys-D-Ala-D-Ala)-di-trans,octa-cis-undecaprenyl diphosphate + UDP + H(+). It functions in the pathway cell wall biogenesis; peptidoglycan biosynthesis. Cell wall formation. Catalyzes the transfer of a GlcNAc subunit on undecaprenyl-pyrophosphoryl-MurNAc-pentapeptide (lipid intermediate I) to form undecaprenyl-pyrophosphoryl-MurNAc-(pentapeptide)GlcNAc (lipid intermediate II). This Streptococcus thermophilus (strain ATCC BAA-491 / LMD-9) protein is UDP-N-acetylglucosamine--N-acetylmuramyl-(pentapeptide) pyrophosphoryl-undecaprenol N-acetylglucosamine transferase.